We begin with the raw amino-acid sequence, 480 residues long: V-type ATP synthase beta chain 2 (480 aa).

It belongs to the ATPase alpha/beta chains family.

Functionally, produces ATP from ADP in the presence of a proton gradient across the membrane. The V-type beta chain is a regulatory subunit. The polypeptide is V-type ATP synthase beta chain 2 (atpB2) (Treponema pallidum (strain Nichols)).